The sequence spans 499 residues: Glycerol kinase (499 aa).

Residue threonine 12 participates in ADP binding. ATP contacts are provided by threonine 12, threonine 13, and serine 14. Threonine 12 serves as a coordination point for sn-glycerol 3-phosphate. Arginine 16 serves as a coordination point for ADP. 4 residues coordinate sn-glycerol 3-phosphate: arginine 82, glutamate 83, tyrosine 134, and aspartate 243. Glycerol-binding residues include arginine 82, glutamate 83, tyrosine 134, aspartate 243, and glutamine 244. ADP-binding residues include threonine 265 and glycine 308. 4 residues coordinate ATP: threonine 265, glycine 308, glutamine 312, and glycine 411. Position 411 (glycine 411) interacts with ADP.

Belongs to the FGGY kinase family.

The enzyme catalyses glycerol + ATP = sn-glycerol 3-phosphate + ADP + H(+). It functions in the pathway polyol metabolism; glycerol degradation via glycerol kinase pathway; sn-glycerol 3-phosphate from glycerol: step 1/1. With respect to regulation, inhibited by fructose 1,6-bisphosphate (FBP). In terms of biological role, key enzyme in the regulation of glycerol uptake and metabolism. Catalyzes the phosphorylation of glycerol to yield sn-glycerol 3-phosphate. The sequence is that of Glycerol kinase from Agrobacterium fabrum (strain C58 / ATCC 33970) (Agrobacterium tumefaciens (strain C58)).